Reading from the N-terminus, the 1651-residue chain is Roundabout homolog 1 (1651 aa).

Residues 1-25 (MKWKHLPLLVMISLLTLSKKHLLLA) form the signal peptide. Residues 26-897 (QLIPDPEDLE…QQISDVVKQP (872 aa)) lie on the Extracellular side of the membrane. The interval 31-66 (PEDLERGNDNGTPAPTSDNDDNSLGYTGSRLRQEDF) is disordered. The span at 39 to 56 (DNGTPAPTSDNDDNSLGY) shows a compositional bias: polar residues. Ig-like C2-type domains follow at residues 68-164 (PRIV…ASLE), 170-257 (DDFR…ADVT), 262-346 (PSFV…ATLT), 351-446 (PHFV…LEVT), and 455-541 (PVIR…AYIE). A disulfide bridge connects residues Cys-89 and Cys-147. Residue Asn-160 is glycosylated (N-linked (GlcNAc...) asparagine). Intrachain disulfides connect Cys-191–Cys-240, Cys-283–Cys-330, and Cys-372–Cys-428. N-linked (GlcNAc...) asparagine glycosylation occurs at Asn-463. The cysteines at positions 476 and 525 are disulfide-linked. Fibronectin type-III domains are found at residues 563 to 657 (APSK…TQDV), 676 to 773 (VVLH…TLEE), and 778 to 874 (PPRS…LDSH). Residues Asn-790, Asn-820, and Asn-827 are each glycosylated (N-linked (GlcNAc...) asparagine). A helical membrane pass occupies residues 898–918 (AFIAGIGAACWIILMVFSIWL). Residues 919–1651 (YRHRKKRNGL…NNEELEETES (733 aa)) lie on the Cytoplasmic side of the membrane. Phosphoserine is present on Ser-940. Thr-948 carries the post-translational modification Phosphothreonine. Tyr-1038 carries the phosphotyrosine modification. Residue Ser-1055 is modified to Phosphoserine. At Tyr-1073 the chain carries Phosphotyrosine. Positions 1086–1107 (NMNNGGGDSSEKHWKPPGQQKQ) are disordered. Tyr-1114 carries the post-translational modification Phosphotyrosine. Disordered regions lie at residues 1137-1337 (PYNH…ADME), 1352-1397 (EQTP…DGSF), and 1420-1651 (RRQM…ETES). Residues 1147–1163 (GGSYNSSDRGSSTSGSQ) show a composition bias toward low complexity. Positions 1186-1196 (LPPPPAHPPPH) are enriched in pro residues. Residue Thr-1240 is modified to Phosphothreonine. A compositionally biased stretch (polar residues) spans 1255–1269 (YSHQSTATLTPSPQE). Residues 1281 to 1293 (DLGHMPHPPDRRR) are compositionally biased toward basic and acidic residues. A compositionally biased stretch (pro residues) spans 1296–1307 (VSPPPPPRPISP). A Phosphoserine modification is found at Ser-1297. Over residues 1322 to 1336 (MDTDAPEEEEDEADM) the composition is skewed to acidic residues. The span at 1384-1397 (SSGRSSVSSSDGSF) shows a compositional bias: low complexity. The span at 1438 to 1451 (PRPTSPVSTDSNMS) shows a compositional bias: polar residues. Positions 1459-1470 (RPTKKQKHQPGH) are enriched in basic residues. A compositionally biased stretch (pro residues) spans 1480–1490 (LPPPPVPPPAI). Basic and acidic residues-rich tracts occupy residues 1516–1541 (ARADRSSDRKGGSYKGREALDGRQVT) and 1549–1573 (DPREAQEQPNEGKARGTKTAKRDLP). Residues 1592 to 1601 (FPTSNNPRDP) are compositionally biased toward polar residues. Positions 1602 to 1614 (SSSSSMSSRGSGS) are enriched in low complexity. The span at 1642–1651 (NNEELEETES) shows a compositional bias: acidic residues.

This sequence belongs to the immunoglobulin superfamily. ROBO family. Homodimer. Dimerization is mediated by the extracellular domain and is independent of SLIT liganding. Interacts with SLIT1. Interacts with SLIT2. Interacts with FLRT3. Interacts with MYO9B (via Rho-GAP domain). Ubiquitinated. May be deubiquitinated by USP33. As to expression, expressed in embryonal brain and spinal cord.

The protein localises to the cell membrane. Its subcellular location is the cell projection. It is found in the axon. The protein resides in the endoplasmic reticulum-Golgi intermediate compartment membrane. In terms of biological role, receptor for SLIT1 and SLIT2 that mediates cellular responses to molecular guidance cues in cellular migration, including axonal navigation at the ventral midline of the neural tube and projection of axons to different regions during neuronal development. Interaction with the intracellular domain of FLRT3 mediates axon attraction towards cells expressing NTN1. In axon growth cones, the silencing of the attractive effect of NTN1 by SLIT2 may require the formation of a ROBO1-DCC complex. Plays a role in the regulation of cell migration via its interaction with MYO9B; inhibits MYO9B-mediated stimulation of RHOA GTPase activity, and thereby leads to increased levels of active, GTP-bound RHOA. May be required for lung development. The sequence is that of Roundabout homolog 1 (Robo1) from Rattus norvegicus (Rat).